The sequence spans 221 residues: Stromal cell-derived factor 2-like protein 1 (221 aa).

An N-terminal signal peptide occupies residues 1-28 (MWSAGSGRAAGPALLGILLALSLSGGRA). 3 MIR domains span residues 33-87 (AGLV…IRGG), 95-150 (GSPV…VRCS), and 151-205 (GQHW…AMEG). Positions 218 to 221 (HDEL) match the Prevents secretion from ER motif.

The protein resides in the endoplasmic reticulum lumen. The sequence is that of Stromal cell-derived factor 2-like protein 1 (SDF2L1) from Bos taurus (Bovine).